A 465-amino-acid polypeptide reads, in one-letter code: Mitochondrial-processing peptidase subunit beta (465 aa).

H79 contributes to the Zn(2+) binding site. The Proton acceptor role is filled by E82. 2 residues coordinate Zn(2+): H83 and E159.

This sequence belongs to the peptidase M16 family. As to quaternary structure, heterodimer of an alpha subunit and a beta subunit subunits, forming the mitochondrial processing protease (MPP) in which the alpha subunit is involved in substrate recognition and binding and the beta subunit is the catalytic subunit. Zn(2+) is required as a cofactor.

The protein resides in the mitochondrion matrix. The catalysed reaction is Release of N-terminal transit peptides from precursor proteins imported into the mitochondrion, typically with Arg in position P2.. Its activity is regulated as follows. Binding to the alpha subunit is required for catalytic activity. Catalytic subunit of the essential mitochondrial processing protease (MPP), which cleaves the mitochondrial sequence off newly imported precursors proteins. Preferentially, cleaves after an arginine at position P2. This Blastocladiella emersonii (Aquatic fungus) protein is Mitochondrial-processing peptidase subunit beta (MPP1).